Reading from the N-terminus, the 318-residue chain is uncharacterized protein (318 aa).

The segment at 19-63 (VPPDARHHEPRPGMTDHPDTGNGIGLTGRPPRAIPDPAPRSSHGP) is disordered. A compositionally biased stretch (basic and acidic residues) spans 21 to 37 (PDARHHEPRPGMTDHPD). Position 72–79 (72–79 (QKGGVGKT)) interacts with ATP.

The protein belongs to the ParA family.

May play a role in septum formation. This is an uncharacterized protein from Mycobacterium tuberculosis (strain CDC 1551 / Oshkosh).